Here is a 215-residue protein sequence, read N- to C-terminus: MSSIAAWGDGRRTRIGVLGGSFNPVHDGHLQLARRALRHLRLDQVWLMISPGYPLKPVQGMAPFDVRLASVAARFDGRRLVATDIERRLGTRYTVDTLGLLRLRFPHAAFVWLMGADGLADLARWRDWRRIVSLVPFAVLPRPTYNPGALRGEAAVALARWRRPARQAPILADCAPCAWAFLPAPQIGISATELRASALRQRSRHPTHKHTTHQE.

Belongs to the NadD family.

It catalyses the reaction nicotinate beta-D-ribonucleotide + ATP + H(+) = deamido-NAD(+) + diphosphate. It functions in the pathway cofactor biosynthesis; NAD(+) biosynthesis; deamido-NAD(+) from nicotinate D-ribonucleotide: step 1/1. Functionally, catalyzes the reversible adenylation of nicotinate mononucleotide (NaMN) to nicotinic acid adenine dinucleotide (NaAD). This is Probable nicotinate-nucleotide adenylyltransferase from Gluconacetobacter diazotrophicus (strain ATCC 49037 / DSM 5601 / CCUG 37298 / CIP 103539 / LMG 7603 / PAl5).